Consider the following 327-residue polypeptide: Protein CONSERVED IN THE GREEN LINEAGE AND DIATOMS 27, chloroplastic (327 aa).

Residues 1–59 (MLRLIVNYPLIPKISHRVCSNSSSKLGSYYDSSSIIKYGGISDVVGKKQELFLSVSVKA) constitute a chloroplast transit peptide. The interval 66-88 (NGGGSMSFSGQSWDPSSEIEVPS) is disordered. The next 3 helical transmembrane spans lie at 119–139 (LGGL…AASF), 148–168 (FILA…LRIY), and 225–245 (LIGT…ATPV).

As to expression, mostly expressed in seeds, leaves and flowers, and, to a lower extent, in roots.

The protein resides in the membrane. Its subcellular location is the plastid. It is found in the chloroplast. Functionally, required for growth in low iron conditions. The chain is Protein CONSERVED IN THE GREEN LINEAGE AND DIATOMS 27, chloroplastic from Arabidopsis thaliana (Mouse-ear cress).